Reading from the N-terminus, the 214-residue chain is Thiamine-phosphate synthase (214 aa).

4-amino-2-methyl-5-(diphosphooxymethyl)pyrimidine is bound by residues 37–41 (QYREK) and asparagine 73. Residues aspartate 74 and aspartate 93 each coordinate Mg(2+). Serine 112 serves as a coordination point for 4-amino-2-methyl-5-(diphosphooxymethyl)pyrimidine. 2-[(2R,5Z)-2-carboxy-4-methylthiazol-5(2H)-ylidene]ethyl phosphate is bound at residue 139–141 (TIS). 4-amino-2-methyl-5-(diphosphooxymethyl)pyrimidine is bound at residue lysine 142. Residues glycine 171 and 191-192 (IS) contribute to the 2-[(2R,5Z)-2-carboxy-4-methylthiazol-5(2H)-ylidene]ethyl phosphate site.

The protein belongs to the thiamine-phosphate synthase family. Mg(2+) is required as a cofactor.

It catalyses the reaction 2-[(2R,5Z)-2-carboxy-4-methylthiazol-5(2H)-ylidene]ethyl phosphate + 4-amino-2-methyl-5-(diphosphooxymethyl)pyrimidine + 2 H(+) = thiamine phosphate + CO2 + diphosphate. The enzyme catalyses 2-(2-carboxy-4-methylthiazol-5-yl)ethyl phosphate + 4-amino-2-methyl-5-(diphosphooxymethyl)pyrimidine + 2 H(+) = thiamine phosphate + CO2 + diphosphate. The catalysed reaction is 4-methyl-5-(2-phosphooxyethyl)-thiazole + 4-amino-2-methyl-5-(diphosphooxymethyl)pyrimidine + H(+) = thiamine phosphate + diphosphate. Its pathway is cofactor biosynthesis; thiamine diphosphate biosynthesis; thiamine phosphate from 4-amino-2-methyl-5-diphosphomethylpyrimidine and 4-methyl-5-(2-phosphoethyl)-thiazole: step 1/1. In terms of biological role, condenses 4-methyl-5-(beta-hydroxyethyl)thiazole monophosphate (THZ-P) and 2-methyl-4-amino-5-hydroxymethyl pyrimidine pyrophosphate (HMP-PP) to form thiamine monophosphate (TMP). In Listeria innocua serovar 6a (strain ATCC BAA-680 / CLIP 11262), this protein is Thiamine-phosphate synthase.